The sequence spans 347 residues: Biotin synthase (347 aa).

The Radical SAM core domain occupies 40–258; that stretch reads AQVQVSTLLS…IAVARIAMPR (219 aa). Residues Cys55, Cys59, and Cys62 each contribute to the [4Fe-4S] cluster site. Positions 99, 130, 190, and 262 each coordinate [2Fe-2S] cluster.

This sequence belongs to the radical SAM superfamily. Biotin synthase family. As to quaternary structure, homodimer. The cofactor is [4Fe-4S] cluster. It depends on [2Fe-2S] cluster as a cofactor.

It catalyses the reaction (4R,5S)-dethiobiotin + (sulfur carrier)-SH + 2 reduced [2Fe-2S]-[ferredoxin] + 2 S-adenosyl-L-methionine = (sulfur carrier)-H + biotin + 2 5'-deoxyadenosine + 2 L-methionine + 2 oxidized [2Fe-2S]-[ferredoxin]. The protein operates within cofactor biosynthesis; biotin biosynthesis; biotin from 7,8-diaminononanoate: step 2/2. Functionally, catalyzes the conversion of dethiobiotin (DTB) to biotin by the insertion of a sulfur atom into dethiobiotin via a radical-based mechanism. This Stenotrophomonas maltophilia (strain K279a) protein is Biotin synthase.